The following is a 522-amino-acid chain: MPQLDLSWLGLRLETSLPWLLLLLIGASWLLVRVLTQTYIFYRTYQHLCDFPQPPKWNWFLGHLGMITPTEQGLKQVTKLVATYPQGFMTWLGPILPIITLCHPDVIRSVLSASASVALKEVIFYSFLKPWLGDGLLLSDGDKWSCHRRMLTPAFHFNILKPYVKIFNDSTNIMHAKWQDLASGGSARLDMFKNISLMTLDSLQKCVFSFDSNCQEKPSEYISAILELSALVAKRYQQLLLHTDSLYQLTHNGRRFHKACKLVHNFTDAVIQGRRRALPSQHEDDILKAKARSKTLDFIDVLLLTKDEDGKELSDEDIRAEADTFMFEGHDTTASGLSWILYNLARHPEYQERCRQEVRELLRDRESTEIEWDDLAQLPFLTMCIKESLRLHPPVTVISRRCTQDIVLPDGRVIPKGVICIINIFATHHNPTVWPDPEVYDPFRFDPENIKDRSPLAFIPFSAGPRNCIGQTFAMNEMKVALALTLLRFRVLPDDKEPRRKPELILRAEGGLWLRVEPLSTQ.

The next 2 helical transmembrane spans lie at 15-35 (TSLP…VRVL) and 87-107 (GFMT…PDVI). Residues Glu328 and Cys468 each contribute to the heme site.

This sequence belongs to the cytochrome P450 family. It depends on heme as a cofactor. Expressed in hepatocytes. High expression in liver and kidney. Lower expression in brain.

It is found in the endoplasmic reticulum membrane. The protein resides in the microsome membrane. The catalysed reaction is (5Z,8Z,11Z,14Z)-eicosatetraenoate + reduced [NADPH--hemoprotein reductase] + O2 = 20-hydroxy-(5Z,8Z,11Z,14Z)-eicosatetraenoate + oxidized [NADPH--hemoprotein reductase] + H2O + H(+). It catalyses the reaction leukotriene B4 + reduced [NADPH--hemoprotein reductase] + O2 = 20-hydroxy-leukotriene B4 + oxidized [NADPH--hemoprotein reductase] + H2O + H(+). The enzyme catalyses 6-trans-leukotriene B4 + reduced [NADPH--hemoprotein reductase] + O2 = 20-hydroxy-6-trans-leukotriene B4 + oxidized [NADPH--hemoprotein reductase] + H2O + H(+). It carries out the reaction prostaglandin A1 + reduced [NADPH--hemoprotein reductase] + O2 = 20-hydroxy prostaglandin A1 + oxidized [NADPH--hemoprotein reductase] + H2O + H(+). The catalysed reaction is prostaglandin E1 + reduced [NADPH--hemoprotein reductase] + O2 = 20-hydroxy prostaglandin E1 + oxidized [NADPH--hemoprotein reductase] + H2O + H(+). A cytochrome P450 monooxygenase involved in the metabolism of arachidonic acid and its oxygenated derivatives. Mechanistically, uses molecular oxygen inserting one oxygen atom into a substrate, and reducing the second into a water molecule, with two electrons provided by NADPH via cytochrome P450 reductase (CPR; NADPH-ferrihemoprotein reductase). Participates in the conversion of arachidonic acid to omega-hydroxyeicosatetraenoic acid (20-HETE), a signaling molecule acting both as vasoconstrictive and natriuretic with overall effect on arterial blood pressure. Hydroxylates the terminal carbon (omega-hydroxylation) of inflammatory lipid mediators, including prostaglandin (PG) A1, PGE1 and leukotriene B4 (LTB4), and may play a role in inactivation of these oxylipins during the resolution of inflammation. The polypeptide is Cytochrome P450 4F4 (Rattus norvegicus (Rat)).